The chain runs to 476 residues: tRNA-2-methylthio-N(6)-dimethylallyladenosine synthase (476 aa).

The 118-residue stretch at 5–122 (KKLYIKTWGC…LPEMINQVKG (118 aa)) folds into the MTTase N-terminal domain. 6 residues coordinate [4Fe-4S] cluster: Cys14, Cys51, Cys85, Cys159, Cys163, and Cys166. Positions 145 to 377 (RAEGPSAFVS…QQRINQQAMS (233 aa)) constitute a Radical SAM core domain. The region spanning 380–443 (RAMLGSVQRI…ANSLRGKVIR (64 aa)) is the TRAM domain.

Belongs to the methylthiotransferase family. MiaB subfamily. As to quaternary structure, monomer. [4Fe-4S] cluster serves as cofactor.

The protein localises to the cytoplasm. The catalysed reaction is N(6)-dimethylallyladenosine(37) in tRNA + (sulfur carrier)-SH + AH2 + 2 S-adenosyl-L-methionine = 2-methylsulfanyl-N(6)-dimethylallyladenosine(37) in tRNA + (sulfur carrier)-H + 5'-deoxyadenosine + L-methionine + A + S-adenosyl-L-homocysteine + 2 H(+). Catalyzes the methylthiolation of N6-(dimethylallyl)adenosine (i(6)A), leading to the formation of 2-methylthio-N6-(dimethylallyl)adenosine (ms(2)i(6)A) at position 37 in tRNAs that read codons beginning with uridine. This chain is tRNA-2-methylthio-N(6)-dimethylallyladenosine synthase, found in Photorhabdus laumondii subsp. laumondii (strain DSM 15139 / CIP 105565 / TT01) (Photorhabdus luminescens subsp. laumondii).